Reading from the N-terminus, the 228-residue chain is Archaeal flagellar ATP-binding protein FlaH (228 aa).

Positions 30, 31, 33, 34, 35, 57, and 191 each coordinate ATP. Ser34 contributes to the Mg(2+) binding site. Glu57 serves as a coordination point for Mg(2+).

It belongs to the FlaH family. In terms of assembly, the S.acidocaldarius archaellum assembly machinery and its filament consist of seven proteins (FlaB, FlaF, FlaG, FlaH, FlaI, FlaJ and FlaX). Interacts directly with the FlaX ring and the motor ATPase FlaI. Monomers, which can probably form homohexamers upon binding to ATP. In vitro, FlaH assembles as a second ring inside the FlaX ring.

The protein localises to the archaeal flagellum. The protein resides in the cytoplasm. Component of the archaellum. FlaX, FlaH and FlaI form the core cytoplasmic motor complex of the crenarchaeal archaellum. FlaH binds ATP with high affinity but lacks detectable in vitro ATPase activity. ATP binding is essential for interaction with FlaI and for archaellum assembly. This Sulfolobus acidocaldarius (strain ATCC 33909 / DSM 639 / JCM 8929 / NBRC 15157 / NCIMB 11770) protein is Archaeal flagellar ATP-binding protein FlaH.